The primary structure comprises 275 residues: DNA-directed RNA polymerase subunit Rpo3 (275 aa).

Belongs to the archaeal Rpo3/eukaryotic RPB3 RNA polymerase subunit family. Part of the RNA polymerase complex.

Its subcellular location is the cytoplasm. The catalysed reaction is RNA(n) + a ribonucleoside 5'-triphosphate = RNA(n+1) + diphosphate. DNA-dependent RNA polymerase (RNAP) catalyzes the transcription of DNA into RNA using the four ribonucleoside triphosphates as substrates. This Methanopyrus kandleri (strain AV19 / DSM 6324 / JCM 9639 / NBRC 100938) protein is DNA-directed RNA polymerase subunit Rpo3.